Here is a 443-residue protein sequence, read N- to C-terminus: sn-2 acyl-lipid omega-3 desaturase (ferredoxin), chloroplastic (443 aa).

The transit peptide at 1–51 (MAGLVLSGCAIKPFSQSLPIPTKRFITNPSNINLLHPKDPIFSPNFHGFSR) directs the protein to the chloroplast. A run of 2 helical transmembrane segments spans residues 120-140 (MSYV…AAHL) and 143-163 (WLVW…LFVL). The Histidine box-1 signature appears at 165–169 (HDCGH). A Histidine box-2 motif is present at residues 201–205 (HRTHH). Helical transmembrane passes span 281–301 (TICW…VGPV) and 304–324 (LKLY…VTYL). The short motif at 368-372 (HVIHH) is the Histidine box-3 element.

It belongs to the fatty acid desaturase type 1 family. Highly expressed in leaves and cotyledons, while no or little expression detected in mature seeds, roots and stems.

It is found in the plastid. It localises to the chloroplast membrane. It catalyses the reaction a (7Z,10Z)-hexadecadienoyl-containing glycerolipid + 2 reduced [2Fe-2S]-[ferredoxin] + O2 + 2 H(+) = a (7Z,10Z,13Z)-hexadecatrienoyl-containing glycerolipid + 2 oxidized [2Fe-2S]-[ferredoxin] + 2 H2O. It carries out the reaction a (9Z,12Z)-octadecadienoyl-containing glycerolipid + 2 reduced [2Fe-2S]-[ferredoxin] + O2 + 2 H(+) = (9Z,12Z,15Z)-octadecatrienoyl-containing glycerolipid + 2 oxidized [2Fe-2S]-[ferredoxin] + 2 H2O. It functions in the pathway lipid metabolism; polyunsaturated fatty acid biosynthesis. In terms of biological role, chloroplast omega-3 fatty acid desaturase introduces the third double bond in the biosynthesis of 18:3, and probably also 16:3 fatty acids, important constituents of plant membranes. It is thought to use ferredoxin as an electron donor and to act on fatty acids esterified to galactolipids, sulfolipids and phosphatidylglycerol. This is sn-2 acyl-lipid omega-3 desaturase (ferredoxin), chloroplastic from Helianthus annuus (Common sunflower).